The following is a 310-amino-acid chain: Mitochondrial citrate transporter E (310 aa).

Solcar repeat units lie at residues 2-95 (STTT…LRQG), 107-199 (QSLG…AKRR), and 208-293 (DGPG…TNKI). A run of 6 helical transmembrane segments spans residues 8–28 (FIAG…FETV), 72–92 (GSAY…YEPL), 114–133 (LAGA…FFLV), 178–198 (AMVR…FAKR), 211–228 (GLHL…CCVM), and 265–286 (IYKG…TLSL).

This sequence belongs to the mitochondrial carrier (TC 2.A.29) family.

The protein localises to the mitochondrion inner membrane. Functionally, mitochondrial transporter that does not mediate citrate export from mitochondria to cytoplasm. Its exact function has still to be determined. The protein is Mitochondrial citrate transporter E of Aspergillus niger (strain ATCC 1015 / CBS 113.46 / FGSC A1144 / LSHB Ac4 / NCTC 3858a / NRRL 328 / USDA 3528.7).